The sequence spans 648 residues: cAMP-dependent protein kinase catalytic subunit (648 aa).

4 stretches are compositionally biased toward low complexity: residues 1–20 (MSNS…TINN), 46–67 (SGNN…NSSG), 136–175 (QQQP…PQQQ), and 232–254 (NTPS…NPHT). Disordered regions lie at residues 1–25 (MSNS…KVNV), 40–86 (GGGG…TKMD), 121–175 (KVPS…PQQQ), and 219–290 (QQQQ…DTNP). The span at 255–290 (SGLSLQHAHSSYTPSNVLHSPTHFQSSLPTRLDTNP) shows a compositional bias: polar residues. The region spanning 336 to 590 (FKQIRVIGTG…ALDVKNHRWF (255 aa)) is the Protein kinase domain. Residues 342–350 (IGTGTFGKV) and lysine 365 contribute to the ATP site. Aspartate 459 acts as the Proton acceptor in catalysis. Position 490 is a phosphothreonine (threonine 490). Residues 591 to 648 (SDINWERLYQRRDNGPFIPKIQHQGDSSNFEMYDEEEMVEEPPSSNYVDPYAHLFKDF) enclose the AGC-kinase C-terminal domain.

It belongs to the protein kinase superfamily. AGC Ser/Thr protein kinase family. cAMP subfamily. As to quaternary structure, in Dictyostelium the holoenzyme is a dimer composed of a regulatory (R) and a catalytic (C) subunit. In the presence of cAMP it dissociates into the active C subunit and an R monomer.

The enzyme catalyses L-seryl-[protein] + ATP = O-phospho-L-seryl-[protein] + ADP + H(+). It carries out the reaction L-threonyl-[protein] + ATP = O-phospho-L-threonyl-[protein] + ADP + H(+). In terms of biological role, essential for differentiation and fruit morphogenesis. The protein is cAMP-dependent protein kinase catalytic subunit (pkaC) of Dictyostelium discoideum (Social amoeba).